A 448-amino-acid polypeptide reads, in one-letter code: MSLIVSDRFRIVVGLGKSGMSLVRFLANQGVSFAVADTRENPPELATLRRDYPQVEVRCGELDVDFLCRADELYVSPGLALATPALQQAHARGVKLSGDIELFARYAKAPVIAITGSNAKSTVTTLVGEMAAAAGKRVAVGGNLGTPALDLLSDEVELYVMELSSFQLETTDQLNAEVATVLNISEDHMDRYSGLPAYHLAKHRIFRGARQVVVNGQDALSRPLIGEGLPCWTFGLNKPDFHGFGLREENGEKYLAFQFENLMPVRELKVRGAHNQANALAALALGHAVGLPFDAMLASLREFTGLEHRCQWLREHDGVHYYNDSKATNVGAALAAIEGLGSDIDGKLVLIAGGDGKGADFSGLRAPVARHCRAAVLLGRDAELIAQALGDAVPLLRVDTVQAAVEHSAKLAQCGDAVLLSPACASLDMFKNYEERGRVFAQAVECLS.

116–122 contacts ATP; that stretch reads GSNAKST.

Belongs to the MurCDEF family.

Its subcellular location is the cytoplasm. It carries out the reaction UDP-N-acetyl-alpha-D-muramoyl-L-alanine + D-glutamate + ATP = UDP-N-acetyl-alpha-D-muramoyl-L-alanyl-D-glutamate + ADP + phosphate + H(+). It participates in cell wall biogenesis; peptidoglycan biosynthesis. Cell wall formation. Catalyzes the addition of glutamate to the nucleotide precursor UDP-N-acetylmuramoyl-L-alanine (UMA). This chain is UDP-N-acetylmuramoylalanine--D-glutamate ligase, found in Pseudomonas syringae pv. syringae (strain B728a).